Here is a 317-residue protein sequence, read N- to C-terminus: N-acetylmuramoyl-L-alanine amidase XlyB (317 aa).

The N-terminal stretch at 1–39 (MSIPVKKNLVSEAKYALKCPNAMSAEYITIHNTANDASA) is a signal peptide. In terms of domain architecture, N-acetylmuramoyl-L-alanine amidase spans 40-142 (ANEISYMIGN…QDWSGKYCPH (103 aa)). The LysM domain occupies 177-221 (SEYHVKKGDTLSGIAASHGASVKTLQSINHITDPNHIKIGQVIKL).

The protein belongs to the N-acetylmuramoyl-L-alanine amidase 2 family.

Its subcellular location is the secreted. It catalyses the reaction Hydrolyzes the link between N-acetylmuramoyl residues and L-amino acid residues in certain cell-wall glycopeptides.. Functionally, autolysins are involved in some important biological processes such as cell separation, cell-wall turnover, competence for genetic transformation, formation of the flagella and sporulation. This is N-acetylmuramoyl-L-alanine amidase XlyB (xlyB) from Bacillus subtilis (strain 168).